A 333-amino-acid polypeptide reads, in one-letter code: MDGIAELTGARVEDLAGMDVFQGCPAEGLVSLAASVQPLRAAAGQVLLRQGEPAVSFLLISSGSAEVSHVGDDGVAIIARALPGMIVGEIALLRDSPRSATVTTIEPLTGWTGGRGAFATMVHIPGVGERLLRTARQRLAAFVSPIPVRLADGTQLMLRPVLPGDRERTVHGHIQFSGETLYRRFMSARVPSPALMHYLSEVDYVDHFVWVVTDGSDPVADARFVRDETDPTVAEIAFTVADAYQGRGIGSFLIGALSVAARVDGVERFAARMLSDNVPMRTIMDRYGAVWQREDVGVITTMIDVPGPGELSLGREMVDQINRVARQVIEAVG.

3',5'-cyclic AMP contacts are provided by residues 88–91, 98–99, and R138; these read GEIA and RS. The N-acetyltransferase domain maps to 156-318; the sequence is LMLRPVLPGD…GELSLGREMV (163 aa). H173 is a binding site for substrate. D214 serves as a coordination point for Mg(2+). Substrate contacts are provided by residues 238-240, 246-251, N277, and R286; these read FTV and GRGIGS.

Homodimer. The cofactor is Mg(2+).

With respect to regulation, autoinhibited and allosterically activated by 3,5-cyclic adenosine monophosphate (cAMP). An extensive conformational rearrangement relieves this autoinhibition by means of a substrate-mimicking lid that covers the protein-substrate binding surface. Catalyzes specifically the acetylation of the epsilon-amino group of a highly conserved lysine residue in acetyl-CoA synthetase (ACS). This acetylation results in the inactivation of ACS activity and could be important for mycobacteria to adjust to environmental changes. The chain is Acetyltransferase Pat from Mycobacterium tuberculosis (strain ATCC 25618 / H37Rv).